A 957-amino-acid polypeptide reads, in one-letter code: Vacuolar membrane protease (957 aa).

At 1-10 (MARYNPFSFT) the chain is on the cytoplasmic side. The helical transmembrane segment at 11 to 31 (PGPVVFFTTVIYVGLFAALLV) threads the bilayer. At 32–369 (THLTVPDYPS…RVFVVFQLHT (338 aa)) the chain is on the vacuolar side. N-linked (GlcNAc...) asparagine glycosylation is found at N48, N105, and N136. Positions 152 and 164 each coordinate Zn(2+). Residue E198 is the Proton acceptor of the active site. Residues E199, E224, and H297 each coordinate Zn(2+). Residues 370–390 (LFALCVTLLVVAPIALIGLTF) form a helical membrane-spanning segment. The Cytoplasmic segment spans residues 391 to 423 (GLSKADKNYLLARKAFVYSSDDDNPVQLYGWRG). A helical transmembrane segment spans residues 424-444 (FFRFPIVFVSATAVVVALAYL). Topologically, residues 445 to 450 (LVRFNA) are vacuolar. Residues 451–471 (FIIYSSPFAVWSMMLSAWFFV) form a helical membrane-spanning segment. The Cytoplasmic portion of the chain corresponds to 472–490 (AWFFSRGADAMRPSALQRM). The helical transmembrane segment at 491–511 (YALIWLFIGSFVLLTIITVFV) threads the bilayer. Residues 512-521 (NNYQVVAGYP) lie on the Vacuolar side of the membrane. A helical transmembrane segment spans residues 522–542 (ALFYFAVVFAALMLSYLELFF). Over 543–642 (APTKSAYARH…YPGEQEWSGK (100 aa)) the chain is Cytoplasmic. Disordered regions lie at residues 560–591 (RRNSESASRPLTGSTTAARSDDRPVADDDATE) and 603–628 (FTRYGSRRDSTSEGDEDHAQGSRRLD). Positions 564–577 (ESASRPLTGSTTAA) are enriched in polar residues. A helical transmembrane segment spans residues 643–663 (LPSWIWIIQLLLLAPLVIVLV). Topologically, residues 664–685 (GQVALLLTSALYQTPSDGNSPL) are vacuolar. The chain crosses the membrane as a helical span at residues 686-706 (FIYLAIAALSVLLLAPTGPFI). Topologically, residues 707 to 713 (HRFTYHV) are cytoplasmic. Residues 714-734 (PTFLFLVCLATVIYNLVAFPF) form a helical membrane-spanning segment. Over 735–957 (SRDHRLKVYF…LVEGFKQFEI (223 aa)) the chain is Vacuolar. 3 N-linked (GlcNAc...) asparagine glycosylation sites follow: N782, N818, and N834.

Belongs to the peptidase M28 family. Zn(2+) serves as cofactor.

The protein localises to the vacuole membrane. Its function is as follows. May be involved in vacuolar sorting and osmoregulation. In Pyrenophora tritici-repentis (strain Pt-1C-BFP) (Wheat tan spot fungus), this protein is Vacuolar membrane protease.